A 346-amino-acid polypeptide reads, in one-letter code: MKRITLYAAGSAIIGAMLLAGPAHAMHISEGILPLGWAALWFAVAAPFLALGIRRVNELSRHDLSFKPLVGLMAAVVFIISCMPIPVPTAGTCSHPCGTGIAAILVGPLVSVVITTVALLIQALFLAHGGLSTLGADVVSMGVAGSFAGWFVFRGMRRLGAGLAVAAFVAGLLADWATYLTTALELSSGVRGSEPFYPLFLKIVAAFVPTQLPLGVLEGAMTAGMVVLLHRKRPDLLAKMGVVDAGGPGAGPRRATVVMLALFCLLASLLVAGPSRASEKWPGVDETVVEKIAAEHGREPRDPLINTDQGDLLLFVFLLAGTVGGFAAGYFWRMLVAERRTYDDHT.

The N-terminal stretch at 1-25 (MKRITLYAAGSAIIGAMLLAGPAHA) is a signal peptide. A run of 8 helical transmembrane segments spans residues 31-51 (GILPLGWAALWFAVAAPFLAL), 68-88 (PLVGLMAAVVFIISCMPIPVP), 101-121 (IAAILVGPLVSVVITTVALLI), 133-153 (TLGADVVSMGVAGSFAGWFVF), 159-179 (LGAGLAVAAFVAGLLADWATY), 196-216 (FYPLFLKIVAAFVPTQLPLGV), 255-275 (ATVVMLALFCLLASLLVAGPS), and 312-332 (LLLFVFLLAGTVGGFAAGYFW).

The protein belongs to the CbiM family. As to quaternary structure, forms an energy-coupling factor (ECF) transporter complex composed of an ATP-binding protein (A component, CbiO), a transmembrane protein (T component, CbiQ) and 2 possible substrate-capture proteins (S components, CbiM and CbiN) of unknown stoichimetry.

It is found in the cell inner membrane. The protein operates within cofactor biosynthesis; adenosylcobalamin biosynthesis. Functionally, part of the energy-coupling factor (ECF) transporter complex CbiMNOQ involved in cobalt import. This chain is Cobalt transport protein CbiM, found in Geobacter sulfurreducens (strain ATCC 51573 / DSM 12127 / PCA).